We begin with the raw amino-acid sequence, 205 residues long: Large ribosomal subunit protein uL4 (205 aa).

A disordered region spans residues 43–77; it reads RRRSGTASTKGRSDVAGSRAKLFRQKGTGRARRGD. A compositionally biased stretch (basic residues) spans 63 to 73; that stretch reads KLFRQKGTGRA.

This sequence belongs to the universal ribosomal protein uL4 family. Part of the 50S ribosomal subunit.

In terms of biological role, one of the primary rRNA binding proteins, this protein initially binds near the 5'-end of the 23S rRNA. It is important during the early stages of 50S assembly. It makes multiple contacts with different domains of the 23S rRNA in the assembled 50S subunit and ribosome. Forms part of the polypeptide exit tunnel. This chain is Large ribosomal subunit protein uL4, found in Desulfosudis oleivorans (strain DSM 6200 / JCM 39069 / Hxd3) (Desulfococcus oleovorans).